Consider the following 454-residue polypeptide: Ornithine aminotransferase (454 aa).

3 residues coordinate pyridoxal 5'-phosphate: Gly124, Thr125, and Gln267. Lys293 carries the N6-(pyridoxal phosphate)lysine modification. Thr321 contributes to the pyridoxal 5'-phosphate binding site.

Belongs to the class-III pyridoxal-phosphate-dependent aminotransferase family. Homotetramer; dimer of dimers. The cofactor is pyridoxal 5'-phosphate.

The catalysed reaction is L-ornithine + 2-oxoglutarate = L-glutamate 5-semialdehyde + L-glutamate. The enzyme catalyses L-lysine + 2-oxoglutarate = (S)-2-amino-6-oxohexanoate + L-glutamate. In terms of biological role, catalyzes the conversion of L-ornithine and 2-oxoglutarate to L-glutamate semialdehyde and L-glutamate. L-ornithine is the best substrate, but the enzyme also shows good activity toward L-lysine, and low activity toward D-ornithine, D-lysine, 5-aminovalerate, 6-aminohexanoate and GABA. The enzyme activity is specific for 2-oxoglutarate. The polypeptide is Ornithine aminotransferase (Pyrococcus horikoshii (strain ATCC 700860 / DSM 12428 / JCM 9974 / NBRC 100139 / OT-3)).